A 145-amino-acid chain; its full sequence is D-aminoacyl-tRNA deacylase (145 aa).

The short motif at 137 to 138 is the Gly-cisPro motif, important for rejection of L-amino acids element; that stretch reads GP.

It belongs to the DTD family. Homodimer.

Its subcellular location is the cytoplasm. It catalyses the reaction glycyl-tRNA(Ala) + H2O = tRNA(Ala) + glycine + H(+). The catalysed reaction is a D-aminoacyl-tRNA + H2O = a tRNA + a D-alpha-amino acid + H(+). Its function is as follows. An aminoacyl-tRNA editing enzyme that deacylates mischarged D-aminoacyl-tRNAs. Also deacylates mischarged glycyl-tRNA(Ala), protecting cells against glycine mischarging by AlaRS. Acts via tRNA-based rather than protein-based catalysis; rejects L-amino acids rather than detecting D-amino acids in the active site. By recycling D-aminoacyl-tRNA to D-amino acids and free tRNA molecules, this enzyme counteracts the toxicity associated with the formation of D-aminoacyl-tRNA entities in vivo and helps enforce protein L-homochirality. This is D-aminoacyl-tRNA deacylase from Shewanella baltica (strain OS223).